We begin with the raw amino-acid sequence, 76 residues long: Large ribosomal subunit protein eL20 (76 aa).

The protein belongs to the eukaryotic ribosomal protein eL20 family. In terms of assembly, part of the 50S ribosomal subunit. Binds 23S rRNA.

The polypeptide is Large ribosomal subunit protein eL20 (Methanococcus maripaludis (strain DSM 14266 / JCM 13030 / NBRC 101832 / S2 / LL)).